A 429-amino-acid chain; its full sequence is Glutamate-1-semialdehyde 2,1-aminomutase 2 (429 aa).

Lysine 268 bears the N6-(pyridoxal phosphate)lysine mark.

This sequence belongs to the class-III pyridoxal-phosphate-dependent aminotransferase family. HemL subfamily. In terms of assembly, homodimer. Pyridoxal 5'-phosphate is required as a cofactor.

It is found in the cytoplasm. It catalyses the reaction (S)-4-amino-5-oxopentanoate = 5-aminolevulinate. It participates in porphyrin-containing compound metabolism; protoporphyrin-IX biosynthesis; 5-aminolevulinate from L-glutamyl-tRNA(Glu): step 2/2. The protein is Glutamate-1-semialdehyde 2,1-aminomutase 2 of Bacillus cereus (strain ATCC 10987 / NRS 248).